Consider the following 213-residue polypeptide: Thiopurine S-methyltransferase (213 aa).

Positions 10, 46, 67, and 124 each coordinate S-adenosyl-L-methionine.

It belongs to the class I-like SAM-binding methyltransferase superfamily. TPMT family.

It localises to the cytoplasm. The enzyme catalyses S-adenosyl-L-methionine + a thiopurine = S-adenosyl-L-homocysteine + a thiopurine S-methylether.. This Xanthobacter autotrophicus (strain ATCC BAA-1158 / Py2) protein is Thiopurine S-methyltransferase.